The sequence spans 308 residues: Aspartate carbamoyltransferase catalytic subunit (308 aa).

Residues Arg-55 and Thr-56 each contribute to the carbamoyl phosphate site. Lys-83 is an L-aspartate binding site. Residues Arg-105, His-133, and Gln-136 each coordinate carbamoyl phosphate. Positions 166 and 220 each coordinate L-aspartate. 2 residues coordinate carbamoyl phosphate: Gly-261 and Pro-262.

It belongs to the aspartate/ornithine carbamoyltransferase superfamily. ATCase family. In terms of assembly, heterododecamer (2C3:3R2) of six catalytic PyrB chains organized as two trimers (C3), and six regulatory PyrI chains organized as three dimers (R2).

The catalysed reaction is carbamoyl phosphate + L-aspartate = N-carbamoyl-L-aspartate + phosphate + H(+). Its pathway is pyrimidine metabolism; UMP biosynthesis via de novo pathway; (S)-dihydroorotate from bicarbonate: step 2/3. In terms of biological role, catalyzes the condensation of carbamoyl phosphate and aspartate to form carbamoyl aspartate and inorganic phosphate, the committed step in the de novo pyrimidine nucleotide biosynthesis pathway. This is Aspartate carbamoyltransferase catalytic subunit from Chlorobaculum tepidum (strain ATCC 49652 / DSM 12025 / NBRC 103806 / TLS) (Chlorobium tepidum).